Here is a 305-residue protein sequence, read N- to C-terminus: Dihydroorotate dehydrogenase B (NAD(+)), catalytic subunit (305 aa).

FMN is bound by residues serine 21 and 45 to 46; that span reads KA. Substrate is bound by residues lysine 45 and 69-73; that span reads NAIGL. 2 residues coordinate FMN: asparagine 99 and asparagine 127. Asparagine 127 contributes to the substrate binding site. The Nucleophile role is filled by cysteine 130. Residues lysine 165 and isoleucine 191 each contribute to the FMN site. Position 192-193 (192-193) interacts with substrate; the sequence is NT. Residues glycine 217, 243–244, and 265–266 each bind FMN; these read GG and GT.

It belongs to the dihydroorotate dehydrogenase family. Type 1 subfamily. Heterotetramer of 2 PyrK and 2 PyrD type B subunits. It depends on FMN as a cofactor.

It is found in the cytoplasm. The enzyme catalyses (S)-dihydroorotate + NAD(+) = orotate + NADH + H(+). Its pathway is pyrimidine metabolism; UMP biosynthesis via de novo pathway; orotate from (S)-dihydroorotate (NAD(+) route): step 1/1. Functionally, catalyzes the conversion of dihydroorotate to orotate with NAD(+) as electron acceptor. The polypeptide is Dihydroorotate dehydrogenase B (NAD(+)), catalytic subunit (pyrD) (Halalkalibacterium halodurans (strain ATCC BAA-125 / DSM 18197 / FERM 7344 / JCM 9153 / C-125) (Bacillus halodurans)).